Consider the following 341-residue polypeptide: GTP-binding protein REM 2 (341 aa).

A compositionally biased stretch (acidic residues) spans 1–13 (MHTDLDTDMDMDT). 2 disordered regions span residues 1–71 (MHTD…GSMP) and 84–106 (VDELDWPPQASPSGSSDSLGSGE). Residues 18 to 30 (LCSSSSRQASPLG) are compositionally biased toward polar residues. At serine 27 the chain carries Phosphoserine. Residues 90–106 (PPQASPSGSSDSLGSGE) are compositionally biased toward low complexity. GTP is bound by residues 122–129 (GESGVGKS), 230–233 (NKSD), and 261–262 (AA). The disordered stretch occupies residues 282-309 (RGRGHAGGQRPEPSSPDGPAPPTRRESL). Over residues 294–303 (PSSPDGPAPP) the composition is skewed to pro residues. Serine 296 is subject to Phosphoserine.

The protein belongs to the small GTPase superfamily. RGK family.

The protein resides in the cell membrane. In terms of biological role, binds GTP saturably and exhibits a low intrinsic rate of GTP hydrolysis. This Mus musculus (Mouse) protein is GTP-binding protein REM 2 (Rem2).